Consider the following 357-residue polypeptide: Holliday junction branch migration complex subunit RuvB (357 aa).

The tract at residues methionine 1 to glutamate 27 is disordered. Residues methionine 1–tyrosine 195 are large ATPase domain (RuvB-L). ATP-binding positions include leucine 34, arginine 35, glycine 76, lysine 79, threonine 80, serine 81, glutamate 142–phenylalanine 144, arginine 185, tyrosine 195, and arginine 232. Threonine 80 lines the Mg(2+) pocket. The interval glutamate 196 to aspartate 266 is small ATPAse domain (RuvB-S). The head domain (RuvB-H) stretch occupies residues glutamate 269–glutamate 357. The DNA site is built by arginine 324 and arginine 329.

The protein belongs to the RuvB family. Homohexamer. Forms an RuvA(8)-RuvB(12)-Holliday junction (HJ) complex. HJ DNA is sandwiched between 2 RuvA tetramers; dsDNA enters through RuvA and exits via RuvB. An RuvB hexamer assembles on each DNA strand where it exits the tetramer. Each RuvB hexamer is contacted by two RuvA subunits (via domain III) on 2 adjacent RuvB subunits; this complex drives branch migration. In the full resolvosome a probable DNA-RuvA(4)-RuvB(12)-RuvC(2) complex forms which resolves the HJ.

It is found in the cytoplasm. It carries out the reaction ATP + H2O = ADP + phosphate + H(+). Functionally, the RuvA-RuvB-RuvC complex processes Holliday junction (HJ) DNA during genetic recombination and DNA repair, while the RuvA-RuvB complex plays an important role in the rescue of blocked DNA replication forks via replication fork reversal (RFR). RuvA specifically binds to HJ cruciform DNA, conferring on it an open structure. The RuvB hexamer acts as an ATP-dependent pump, pulling dsDNA into and through the RuvAB complex. RuvB forms 2 homohexamers on either side of HJ DNA bound by 1 or 2 RuvA tetramers; 4 subunits per hexamer contact DNA at a time. Coordinated motions by a converter formed by DNA-disengaged RuvB subunits stimulates ATP hydrolysis and nucleotide exchange. Immobilization of the converter enables RuvB to convert the ATP-contained energy into a lever motion, pulling 2 nucleotides of DNA out of the RuvA tetramer per ATP hydrolyzed, thus driving DNA branch migration. The RuvB motors rotate together with the DNA substrate, which together with the progressing nucleotide cycle form the mechanistic basis for DNA recombination by continuous HJ branch migration. Branch migration allows RuvC to scan DNA until it finds its consensus sequence, where it cleaves and resolves cruciform DNA. The polypeptide is Holliday junction branch migration complex subunit RuvB (Mycolicibacterium gilvum (strain PYR-GCK) (Mycobacterium gilvum (strain PYR-GCK))).